The sequence spans 64 residues: MSSRQGGKMKPLKQKKKQQQDLDPEDIAFKEKQKADAAAKKALMANMKSGKPLVGGGIKKSGKK.

Disordered regions lie at residues Met1–Ala38 and Ala45–Lys64. A compositionally biased stretch (basic and acidic residues) spans Ile27 to Ala38. Residues Leu53–Lys64 are compositionally biased toward gly residues.

It belongs to the TMA7 family. In terms of assembly, interacts with the 40S ribosomal subunit.

Its subcellular location is the cytoplasm. The protein resides in the nucleus. In terms of biological role, involved in protein synthesis. In Saccharomyces cerevisiae (strain ATCC 204508 / S288c) (Baker's yeast), this protein is Translation machinery-associated protein 7 (TMA7).